The chain runs to 107 residues: Nucleoid-associated protein amb4104 (107 aa).

This sequence belongs to the YbaB/EbfC family. Homodimer.

Its subcellular location is the cytoplasm. The protein localises to the nucleoid. Its function is as follows. Binds to DNA and alters its conformation. May be involved in regulation of gene expression, nucleoid organization and DNA protection. The polypeptide is Nucleoid-associated protein amb4104 (Paramagnetospirillum magneticum (strain ATCC 700264 / AMB-1) (Magnetospirillum magneticum)).